A 554-amino-acid chain; its full sequence is Potassium/proton antiporter CemA (554 aa).

A helical transmembrane segment spans residues Ser-50 to Phe-70. Positions Lys-113–Glu-410 are insert. 3 helical membrane passes run Ile-429–Leu-449, Met-479–Phe-499, and Ile-514–Ile-534.

It belongs to the CemA family.

It localises to the plastid. The protein resides in the chloroplast inner membrane. The enzyme catalyses K(+)(in) + H(+)(out) = K(+)(out) + H(+)(in). Its function is as follows. Contributes to K(+)/H(+) antiport activity by supporting proton efflux to control proton extrusion and homeostasis in chloroplasts in a light-dependent manner to modulate photosynthesis. Prevents excessive induction of non-photochemical quenching (NPQ) under continuous-light conditions. Indirectly promotes efficient inorganic carbon uptake into chloroplasts. The chain is Potassium/proton antiporter CemA from Stigeoclonium helveticum (Green alga).